The sequence spans 467 residues: Asparagine--tRNA ligase (467 aa).

The protein belongs to the class-II aminoacyl-tRNA synthetase family. As to quaternary structure, homodimer.

The protein localises to the cytoplasm. The enzyme catalyses tRNA(Asn) + L-asparagine + ATP = L-asparaginyl-tRNA(Asn) + AMP + diphosphate + H(+). The sequence is that of Asparagine--tRNA ligase from Glaesserella parasuis serovar 5 (strain SH0165) (Haemophilus parasuis).